The primary structure comprises 306 residues: N-acetylmuramic acid 6-phosphate etherase (306 aa).

Residues 59–222 (TAQALGRGGR…STGVMVCLGK (164 aa)) form the SIS domain. Catalysis depends on E87, which acts as the Proton donor. E118 is a catalytic residue.

Belongs to the GCKR-like family. MurNAc-6-P etherase subfamily. Homodimer.

The enzyme catalyses N-acetyl-D-muramate 6-phosphate + H2O = N-acetyl-D-glucosamine 6-phosphate + (R)-lactate. It functions in the pathway amino-sugar metabolism; N-acetylmuramate degradation. Specifically catalyzes the cleavage of the D-lactyl ether substituent of MurNAc 6-phosphate, producing GlcNAc 6-phosphate and D-lactate. This chain is N-acetylmuramic acid 6-phosphate etherase, found in Rippkaea orientalis (strain PCC 8801 / RF-1) (Cyanothece sp. (strain PCC 8801)).